The primary structure comprises 120 residues: NAD(P)H-quinone oxidoreductase subunit 3, chloroplastic (120 aa).

Transmembrane regions (helical) follow at residues 9–29 (IFWAFLVISSVIPILAFIISG), 64–84 (MFALVFVVFDVETVFLYPWAM), and 88–108 (VLGVSVFIEALIFVLILIVGS).

Belongs to the complex I subunit 3 family. In terms of assembly, NDH is composed of at least 16 different subunits, 5 of which are encoded in the nucleus.

It localises to the plastid. It is found in the chloroplast thylakoid membrane. It carries out the reaction a plastoquinone + NADH + (n+1) H(+)(in) = a plastoquinol + NAD(+) + n H(+)(out). The catalysed reaction is a plastoquinone + NADPH + (n+1) H(+)(in) = a plastoquinol + NADP(+) + n H(+)(out). Functionally, NDH shuttles electrons from NAD(P)H:plastoquinone, via FMN and iron-sulfur (Fe-S) centers, to quinones in the photosynthetic chain and possibly in a chloroplast respiratory chain. The immediate electron acceptor for the enzyme in this species is believed to be plastoquinone. Couples the redox reaction to proton translocation, and thus conserves the redox energy in a proton gradient. This is NAD(P)H-quinone oxidoreductase subunit 3, chloroplastic from Lemna minor (Common duckweed).